Here is a 144-residue protein sequence, read N- to C-terminus: Toxin MT0934 (144 aa).

Functionally, toxic component of a type II toxin-antitoxin (TA) system. Its toxic effect is neutralized by coexpression with cognate antitoxin MT0933. This chain is Toxin MT0934, found in Mycobacterium tuberculosis (strain CDC 1551 / Oshkosh).